The sequence spans 865 residues: Centrosomal protein of 97 kDa (865 aa).

LRR repeat units follow at residues 37–58 (DIHT…EKCK), 59–80 (RLIQ…AKLT), 81–102 (LLRV…KELV), 103–124 (HLEW…NSCT), 125–146 (ALQH…SKLV), 147–168 (SLKT…PAYL), 171–192 (SLAI…SFLA), and 196–205 (ELEQLSIMNN). In terms of domain architecture, LRRCT spans 211–249 (TPSIPGFDYRPYIVSWCLNLRVLDGYVISQKESLKAEWL). Positions 300–750 (HQRQLMNQSQ…RYGKESDLGD (451 aa)) are CCP110-binding. Phosphoserine is present on residues Ser308, Ser413, and Ser500. Positions 506–529 (ESTEQKQSDIKKPENTQPENKETI) are disordered. Residues 508 to 527 (TEQKQSDIKKPENTQPENKE) show a composition bias toward basic and acidic residues. Phosphoserine is present on Ser530. A Phosphothreonine modification is found at Thr542. Residues 558 to 587 (LNDAATKLQACWRGFYARNYNPQAKDVRYE) enclose the IQ domain. An interaction with MPHOSPH9 region spans residues 587 to 865 (EIRLRRMQEH…FQLLHVGVTV (279 aa)). Residues 715–769 (QHSLDFEKSSTEGSESSIMGNSIDTVRYGKESDLGDVSEEHGEWNKESSNNEQDN) are disordered. The span at 725 to 738 (TEGSESSIMGNSID) shows a compositional bias: polar residues. Positions 741–760 (RYGKESDLGDVSEEHGEWNK) are enriched in basic and acidic residues. Ser763 is subject to Phosphoserine.

In terms of assembly, interacts with CALM1, CEP76, KIF24 and TALPID3. Interacts with CCP110. ENKD1 competes with CEP97 for binding to CCP110, destabilizing the interaction between CP110 and CEP97 which promotes the removal of CCP110 and CEP97 from the mother centriole and allows the initiation of ciliogenesis. Via its interaction with CCP110, may indirectly interact with HERC2 and NEURL4. Interacts with MPHOSPH9.

Its subcellular location is the cytoplasm. The protein resides in the cytoskeleton. It is found in the microtubule organizing center. It localises to the centrosome. The protein localises to the centriole. Acts as a key negative regulator of ciliogenesis in collaboration with CCP110 by capping the mother centriole thereby preventing cilia formation. Required for recruitment of CCP110 to the centrosome. The polypeptide is Centrosomal protein of 97 kDa (CEP97) (Homo sapiens (Human)).